The primary structure comprises 531 residues: Endoglucanase 7 (531 aa).

The signal sequence occupies residues 1–27; the sequence is MRGRALVLVAALLLQLLLLAAAGGAGA. The active-site Nucleophile is the Asp-89. Residues His-430, Asp-482, and Glu-491 contribute to the active site.

The protein belongs to the glycosyl hydrolase 9 (cellulase E) family. Ubiquitous.

It is found in the secreted. It catalyses the reaction Endohydrolysis of (1-&gt;4)-beta-D-glucosidic linkages in cellulose, lichenin and cereal beta-D-glucans.. The polypeptide is Endoglucanase 7 (GLU10) (Oryza sativa subsp. japonica (Rice)).